The following is a 264-amino-acid chain: 3-methyl-2-oxobutanoate hydroxymethyltransferase (264 aa).

The Mg(2+) site is built by Asp-45 and Asp-84. 3-methyl-2-oxobutanoate contacts are provided by residues 45–46 (DS), Asp-84, and Lys-112. Glu-114 lines the Mg(2+) pocket. Glu-181 serves as the catalytic Proton acceptor.

It belongs to the PanB family. In terms of assembly, homodecamer; pentamer of dimers. Requires Mg(2+) as cofactor.

The protein localises to the cytoplasm. The enzyme catalyses 3-methyl-2-oxobutanoate + (6R)-5,10-methylene-5,6,7,8-tetrahydrofolate + H2O = 2-dehydropantoate + (6S)-5,6,7,8-tetrahydrofolate. The protein operates within cofactor biosynthesis; (R)-pantothenate biosynthesis; (R)-pantoate from 3-methyl-2-oxobutanoate: step 1/2. Functionally, catalyzes the reversible reaction in which hydroxymethyl group from 5,10-methylenetetrahydrofolate is transferred onto alpha-ketoisovalerate to form ketopantoate. In Escherichia coli O81 (strain ED1a), this protein is 3-methyl-2-oxobutanoate hydroxymethyltransferase.